A 199-amino-acid polypeptide reads, in one-letter code: uncharacterized protein (199 aa).

The N-terminal stretch at 1 to 28 (MKKLATVGSLIVTSTLVFSSMPFQNAHA) is a signal peptide.

Its subcellular location is the secreted. This is an uncharacterized protein from Staphylococcus aureus (strain NCTC 8325 / PS 47).